The sequence spans 201 residues: 3-isopropylmalate dehydratase small subunit (201 aa).

It belongs to the LeuD family. LeuD type 1 subfamily. Heterodimer of LeuC and LeuD.

The enzyme catalyses (2R,3S)-3-isopropylmalate = (2S)-2-isopropylmalate. It participates in amino-acid biosynthesis; L-leucine biosynthesis; L-leucine from 3-methyl-2-oxobutanoate: step 2/4. Functionally, catalyzes the isomerization between 2-isopropylmalate and 3-isopropylmalate, via the formation of 2-isopropylmaleate. The chain is 3-isopropylmalate dehydratase small subunit from Escherichia fergusonii (strain ATCC 35469 / DSM 13698 / CCUG 18766 / IAM 14443 / JCM 21226 / LMG 7866 / NBRC 102419 / NCTC 12128 / CDC 0568-73).